The following is an 843-amino-acid chain: MECNLAQAKQWVSALDQRRFERALQGSGDAFQHVLAIVPLLLHLNHPQLPGYVIHAPSGIASFLASDYQKKWLTNEYGIHYADHKPSTLKSAVNFHEVFPPILGVYVMGSFGSISQTSSSDLDTWICVRDGLSLDEYTLLTQKAKRISEWAMQFNVEINFYLMDQQRFRNEHYADPLTIENSGSAQYMLLLDEFYRSAVRLAGKPLLWLHLWVENEKDYEKEVARLITEGEIDPNDWVDFGGLGQFSANEYFGASLWHLYKGIDSPYKSVLKILLLEAYSKEYPNTCLIARTFKRDLLAGNTNPDHHFDPYIAILAKVTQYLTALSEFKRLDFVHRCFYVKATEDFARYQANNWRIRYMEILAQEWGWSAETVKHLNKRPFWKIKAVKENHDNIMKFLMLSYRNLVEFARKHHIHSSVVPQDINILSRKLYTAFEELPGKVSLLNTQISHNLSEAHLTFVEVRGNKHFKDGWYLINQPIHHIMFSKERVIEYGESLNKLVSWAYFNHLLTEKTELSIFSKNVTLSTLQRFVTNLRQSFPSTIAKQPKNSDLLNQCEIRSLFIAINLTTDPTSKVEEVLTGISSRDLFSFGSLEQSLVGSIDFTYRNVWNEIRTLHFEGQNAILLALKVLSNKIYRGVNRPDSIQVYCYSERYRQDLRQLVMGLVNRCVSIQVGDIQQPCQTSRLRVAGKNWQLFFEDRGISLQEIGNESVCNEAESAVDFDEVLQTPIEDGETNQESRRYPPEMDAFASEGFLQFFFEDNSDHSFNVYILDESNHLEIYRHCDGEKDEKVREINQLYQNAKQEGDKNPYNIVQHNFNYPQFYQLQNGKNGISIVPFKFRQMNK.

The catalytic stretch occupies residues 1 to 542; it reads MECNLAQAKQ…NLRQSFPSTI (542 aa). The regulatory stretch occupies residues 549 to 843; that stretch reads SDLLNQCEIR…VPFKFRQMNK (295 aa).

It belongs to the adenylyl cyclase class-1 family.

The protein localises to the cytoplasm. It carries out the reaction ATP = 3',5'-cyclic AMP + diphosphate. Plays an essential role in competence development. The sequence is that of Adenylate cyclase (cyaA) from Haemophilus influenzae (strain ATCC 51907 / DSM 11121 / KW20 / Rd).